The chain runs to 491 residues: 4,4'-diapolycopen-4-al dehydrogenase (491 aa).

Glutamate 208 is an active-site residue.

This sequence belongs to the carotenoid/retinoid oxidoreductase family. CrtN subfamily.

It catalyses the reaction all-trans-4,4'-diapolycopen-4-al + A + H2O = all-trans-4,4'-diapolycopen-4-oate + AH2 + H(+). The protein operates within carotenoid biosynthesis. Its function is as follows. Involved in the biosynthesis of the major C30 carotenoid methyl 4'-[6-O-(acylglycosyl)oxy]-4,4'-diapolycopen-4-oic acid via 4,4'-diapolycopen-4-oic acid intermediate. Catalyzes the oxidation of 4,4'-diapolycopen-4-al to yield 4,4'-diapolycopen-4-oic acid. The sequence is that of 4,4'-diapolycopen-4-al dehydrogenase from Metabacillus indicus (Bacillus indicus).